A 192-amino-acid polypeptide reads, in one-letter code: Xanthine phosphoribosyltransferase (192 aa).

Residues L20 and N27 each coordinate xanthine. 128–132 contacts 5-phospho-alpha-D-ribose 1-diphosphate; that stretch reads ADGEA. Position 156 (K156) interacts with xanthine.

It belongs to the purine/pyrimidine phosphoribosyltransferase family. Xpt subfamily. Homodimer.

The protein resides in the cytoplasm. The catalysed reaction is XMP + diphosphate = xanthine + 5-phospho-alpha-D-ribose 1-diphosphate. Its pathway is purine metabolism; XMP biosynthesis via salvage pathway; XMP from xanthine: step 1/1. Its function is as follows. Converts the preformed base xanthine, a product of nucleic acid breakdown, to xanthosine 5'-monophosphate (XMP), so it can be reused for RNA or DNA synthesis. In Agathobacter rectalis (strain ATCC 33656 / DSM 3377 / JCM 17463 / KCTC 5835 / VPI 0990) (Eubacterium rectale), this protein is Xanthine phosphoribosyltransferase.